Reading from the N-terminus, the 116-residue chain is Nucleoid-associated protein Tfu_0045 (116 aa).

The protein belongs to the YbaB/EbfC family. Homodimer.

Its subcellular location is the cytoplasm. The protein resides in the nucleoid. Functionally, binds to DNA and alters its conformation. May be involved in regulation of gene expression, nucleoid organization and DNA protection. The chain is Nucleoid-associated protein Tfu_0045 from Thermobifida fusca (strain YX).